Reading from the N-terminus, the 99-residue chain is CTP synthase (99 aa).

The region spanning 1-99 (TMVTKLEKDS…FIKAIIENNK (99 aa)) is the Glutamine amidotransferase type-1 domain. Position 28 (R28) interacts with L-glutamine. Residues H73 and E75 contribute to the active site.

It belongs to the CTP synthase family. In terms of assembly, homotetramer.

The catalysed reaction is UTP + L-glutamine + ATP + H2O = CTP + L-glutamate + ADP + phosphate + 2 H(+). It catalyses the reaction L-glutamine + H2O = L-glutamate + NH4(+). It carries out the reaction UTP + NH4(+) + ATP = CTP + ADP + phosphate + 2 H(+). The protein operates within pyrimidine metabolism; CTP biosynthesis via de novo pathway; CTP from UDP: step 2/2. Allosterically activated by GTP, when glutamine is the substrate; GTP has no effect on the reaction when ammonia is the substrate. The allosteric effector GTP functions by stabilizing the protein conformation that binds the tetrahedral intermediate(s) formed during glutamine hydrolysis. Inhibited by the product CTP, via allosteric rather than competitive inhibition. Catalyzes the ATP-dependent amination of UTP to CTP with either L-glutamine or ammonia as the source of nitrogen. Regulates intracellular CTP levels through interactions with the four ribonucleotide triphosphates. This chain is CTP synthase, found in Mycoplasma capricolum subsp. capripneumoniae.